The following is a 169-amino-acid chain: Phosphopantetheine adenylyltransferase (169 aa).

Substrate is bound at residue Ser8. Residues 8–9 and His16 each bind ATP; that span reads SF. Substrate is bound by residues Lys40, Thr72, and Arg86. ATP is bound by residues 87–89, Glu97, and 122–128; these read GLR and YSFLSSS.

Belongs to the bacterial CoaD family. Homohexamer. The cofactor is Mg(2+).

Its subcellular location is the cytoplasm. The enzyme catalyses (R)-4'-phosphopantetheine + ATP + H(+) = 3'-dephospho-CoA + diphosphate. Its pathway is cofactor biosynthesis; coenzyme A biosynthesis; CoA from (R)-pantothenate: step 4/5. Its function is as follows. Reversibly transfers an adenylyl group from ATP to 4'-phosphopantetheine, yielding dephospho-CoA (dPCoA) and pyrophosphate. This is Phosphopantetheine adenylyltransferase from Cyanothece sp. (strain PCC 7425 / ATCC 29141).